The sequence spans 699 residues: Endogenous retrovirus group K member 19 Env polyprotein (699 aa).

Residues 1-47 (MNPSEMQRKAPPRRRRHRNRAPLTHKMNKMVTSEEQMKLPSTKKAEP) are disordered. Positions 1–89 (MNPSEMQRKA…ALMIVSMVVS (89 aa)) are cleaved as a signal peptide. Positions 10-20 (APPRRRRHRNR) are enriched in basic residues. At 90-632 (LPMPAGAAAA…NLNPVTWVKT (543 aa)) the chain is on the extracellular side. Residues asparagine 100, asparagine 128, asparagine 153, asparagine 274, asparagine 355, asparagine 372, and asparagine 461 are each glycosylated (N-linked (GlcNAc...) asparagine). The fusion peptide stretch occupies residues 466–486 (FIFTLIAVIMGLIAVTATAAV). 4 N-linked (GlcNAc...) asparagine glycosylation sites follow: asparagine 507, asparagine 554, asparagine 566, and asparagine 585. The chain crosses the membrane as a helical span at residues 633-653 (IGSTTIINLILILVCLFCLLL). Topologically, residues 654–699 (VCRCTQQLRRDSDHRERAMMTMAVLSKRKGGNVGKSKRDQIVTVSV) are cytoplasmic.

It belongs to the beta type-B retroviral envelope protein family. HERV class-II K(HML-2) env subfamily. In terms of assembly, the surface (SU) and transmembrane (TM) proteins form a heterodimer. SU and TM are attached by noncovalent interactions or by a labile interchain disulfide bond. Specific enzymatic cleavages in vivo yield the mature SU and TM proteins.

The protein resides in the cell membrane. It localises to the virion. Retroviral envelope proteins mediate receptor recognition and membrane fusion during early infection. Endogenous envelope proteins may have kept, lost or modified their original function during evolution. This endogenous envelope protein has lost its original fusogenic properties. Its function is as follows. SU mediates receptor recognition. Functionally, TM anchors the envelope heterodimer to the viral membrane through one transmembrane domain. The other hydrophobic domain, called fusion peptide, mediates fusion of the viral membrane with the target cell membrane. This chain is Endogenous retrovirus group K member 19 Env polyprotein (ERVK-19), found in Homo sapiens (Human).